The following is a 1053-amino-acid chain: Probable dihydropyrimidine dehydrogenase [NADP(+)] (1053 aa).

A 4Fe-4S ferredoxin-type 1 domain is found at 84–115 (ERGALKEAMRCLKCADAPCQKSCPTQLDIKSF). [4Fe-4S] cluster is bound by residues Cys94, Cys97, Cys102, Cys106, Cys145, Cys151, Cys155, and Gln171. FAD contacts are provided by residues 207-211 (GCGPA), 231-239 (EKRAYIGGL), Arg248, and Leu274. Residues 354–357 (AGDT), 378–379 (RK), Arg385, 451–453 (AFG), and 495–501 (DVAGVAE) each bind NADP(+). Position 494–503 (494–503 (GDVAGVAETT)) interacts with FAD. FMN contacts are provided by residues Ser574 and 598-599 (KT). Residues Asn633 and 692–694 (NLS) contribute to the substrate site. Cys695 acts as the Proton acceptor in catalysis. Lys733 is an FMN binding site. 760 to 761 (NT) is a substrate binding site. FMN-binding positions include Gly791, 817–819 (TGG), and 840–841 (CS). 2 consecutive 4Fe-4S ferredoxin-type domains span residues 949–981 (EVAIIDHDMCINCGKCYMTCNDSGYQAITFDAV) and 983–1013 (HQPHVTEDDCTGCTLCYSVCPIPECIQMVPR). Residues Cys958, Cys961, Cys964, Cys968, Cys992, Cys995, Cys998, and Cys1002 each contribute to the [4Fe-4S] cluster site.

It belongs to the dihydropyrimidine dehydrogenase family. [4Fe-4S] cluster serves as cofactor. The cofactor is FAD. FMN is required as a cofactor.

The catalysed reaction is 5,6-dihydrouracil + NADP(+) = uracil + NADPH + H(+). The protein operates within amino-acid biosynthesis; beta-alanine biosynthesis. Functionally, involved in pyrimidine base degradation. Catalyzes the reduction of uracil and thymine. Also involved the degradation of the chemotherapeutic drug 5-fluorouracil. The protein is Probable dihydropyrimidine dehydrogenase [NADP(+)] of Caenorhabditis briggsae.